Reading from the N-terminus, the 282-residue chain is Ribosomal RNA small subunit methyltransferase I (282 aa).

This sequence belongs to the methyltransferase superfamily. RsmI family.

Its subcellular location is the cytoplasm. The catalysed reaction is cytidine(1402) in 16S rRNA + S-adenosyl-L-methionine = 2'-O-methylcytidine(1402) in 16S rRNA + S-adenosyl-L-homocysteine + H(+). Its function is as follows. Catalyzes the 2'-O-methylation of the ribose of cytidine 1402 (C1402) in 16S rRNA. This chain is Ribosomal RNA small subunit methyltransferase I, found in Pseudomonas aeruginosa (strain ATCC 15692 / DSM 22644 / CIP 104116 / JCM 14847 / LMG 12228 / 1C / PRS 101 / PAO1).